The chain runs to 72 residues: NAD(P)H-quinone oxidoreductase subunit O (72 aa).

The protein belongs to the complex I NdhO subunit family. As to quaternary structure, NDH-1 can be composed of about 15 different subunits; different subcomplexes with different compositions have been identified which probably have different functions.

It localises to the cellular thylakoid membrane. The catalysed reaction is a plastoquinone + NADH + (n+1) H(+)(in) = a plastoquinol + NAD(+) + n H(+)(out). The enzyme catalyses a plastoquinone + NADPH + (n+1) H(+)(in) = a plastoquinol + NADP(+) + n H(+)(out). Its function is as follows. NDH-1 shuttles electrons from an unknown electron donor, via FMN and iron-sulfur (Fe-S) centers, to quinones in the respiratory and/or the photosynthetic chain. The immediate electron acceptor for the enzyme in this species is believed to be plastoquinone. Couples the redox reaction to proton translocation, and thus conserves the redox energy in a proton gradient. Cyanobacterial NDH-1 also plays a role in inorganic carbon-concentration. The chain is NAD(P)H-quinone oxidoreductase subunit O from Crocosphaera subtropica (strain ATCC 51142 / BH68) (Cyanothece sp. (strain ATCC 51142)).